Here is a 416-residue protein sequence, read N- to C-terminus: Carboxypeptidase B (416 aa).

A signal peptide spans 1–15 (MAFLILVTLALASAH). Residues 16–109 (YSGEHFEGEK…LEGQFGRQVP (94 aa)) constitute a propeptide, activation peptide. Residues 117–411 (KYNRWETIEA…LAIKHLARYV (295 aa)) form the Peptidase M14 domain. 2 residues coordinate Zn(2+): histidine 175 and glutamate 178. Substrate-binding positions include 175-178 (HARE), arginine 233, and 250-251 (TR). Cystine bridges form between cysteine 244-cysteine 267 and cysteine 258-cysteine 272. Residue histidine 303 coordinates Zn(2+). Substrate is bound by residues 304-305 (SY) and tyrosine 355. Glutamate 377 acts as the Proton donor/acceptor in catalysis.

This sequence belongs to the peptidase M14 family. Zn(2+) serves as cofactor.

It is found in the secreted. The protein localises to the zymogen granule lumen. It catalyses the reaction Preferential release of a C-terminal lysine or arginine amino acid.. This chain is Carboxypeptidase B (CPB1), found in Canis lupus familiaris (Dog).